The sequence spans 192 residues: PTS-dependent dihydroxyacetone kinase, ADP-binding subunit DhaL (192 aa).

The DhaL domain occupies 5 to 189 (DTTIEWLGKF…SAYLFETLLE (185 aa)). The Mg(2+) site is built by D29, D34, and D36. ADP is bound by residues 37–40 (HGAN), 78–79 (AS), G115, M124, R161, and 174–176 (DPG).

In terms of assembly, homodimer. The dihydroxyacetone kinase complex is composed of a homodimer of DhaM, a homodimer of DhaK and the subunit DhaL. Mg(2+) is required as a cofactor.

The protein localises to the cytoplasm. The catalysed reaction is dihydroxyacetone + phosphoenolpyruvate = dihydroxyacetone phosphate + pyruvate. The protein operates within polyol metabolism; glycerol degradation. ADP-binding subunit of the dihydroxyacetone kinase, which is responsible for the phosphoenolpyruvate (PEP)-dependent phosphorylation of dihydroxyacetone. DhaL-ADP is converted to DhaL-ATP via a phosphoryl group transfer from DhaM and transmits it to dihydroxyacetone binds to DhaK. This Lactococcus lactis subsp. lactis (strain IL1403) (Streptococcus lactis) protein is PTS-dependent dihydroxyacetone kinase, ADP-binding subunit DhaL.